Here is a 100-residue protein sequence, read N- to C-terminus: UPF0213 protein YhbQ (100 aa).

The region spanning 2-77 is the GIY-YIG domain; that stretch reads TPWYLYLIRT…KQLTKRQKER (76 aa).

The protein belongs to the UPF0213 family.

The sequence is that of UPF0213 protein YhbQ from Escherichia coli O8 (strain IAI1).